A 118-amino-acid chain; its full sequence is Large ribosomal subunit protein uL18 (118 aa).

It belongs to the universal ribosomal protein uL18 family. In terms of assembly, part of the 50S ribosomal subunit; part of the 5S rRNA/L5/L18/L25 subcomplex. Contacts the 5S and 23S rRNAs.

Its function is as follows. This is one of the proteins that bind and probably mediate the attachment of the 5S RNA into the large ribosomal subunit, where it forms part of the central protuberance. The polypeptide is Large ribosomal subunit protein uL18 (Rickettsia canadensis (strain McKiel)).